The primary structure comprises 378 residues: MTVHTEYKRNQIIASSEIDDLIFMTKPQEWSFEEQKEIRDKLVREAFYFHYNRNEEYRNYCINQHVSDNLHTIDEIPVFPTSVFKYKKLHTVTAEDIENWYTSSGTRGVKSHIARDRLSIERLLGSVNFGMKYVGDWFEHQMELINLGPDRFNTNNIWFKYVMSLVELLYPTEFTVDNDKIDFEKTVKHLFRIKNSKKDICLIGPPFFVYLLCQYMKENNIEFKGGDRVHIITGGGWKSNQNDSLDRADFNQLLMDTFQLDKINQIRDTFNQVELNTCFFEDEFQRKHVPPWVYARALDPETLKPVADGEIGLLSYMDASSTAYPAFIVTDDIGIVKEIREPDPYPGVTVEIVRRLNTRAQKGCALSMANVIQKNIKD.

This sequence belongs to the LuxE family.

The enzyme catalyses a long-chain fatty acid + L-cysteinyl-[protein] + ATP = an S-(long-chain fatty acyl)-L-cysteinyl-[protein] + AMP + diphosphate. Its pathway is lipid metabolism; fatty acid reduction for biolumincescence. Functionally, acyl-protein synthetase activates tetradecanoic acid. It is a component of the fatty acid reductase complex responsible for converting tetradecanoic acid to the aldehyde which serves as substrate in the luciferase-catalyzed reaction. This chain is Long-chain-fatty-acid--luciferin-component ligase, found in Aliivibrio fischeri (Vibrio fischeri).